The primary structure comprises 201 residues: 3-isopropylmalate dehydratase small subunit (201 aa).

It belongs to the LeuD family. LeuD type 1 subfamily. As to quaternary structure, heterodimer of LeuC and LeuD.

It carries out the reaction (2R,3S)-3-isopropylmalate = (2S)-2-isopropylmalate. Its pathway is amino-acid biosynthesis; L-leucine biosynthesis; L-leucine from 3-methyl-2-oxobutanoate: step 2/4. In terms of biological role, catalyzes the isomerization between 2-isopropylmalate and 3-isopropylmalate, via the formation of 2-isopropylmaleate. This is 3-isopropylmalate dehydratase small subunit from Afipia carboxidovorans (strain ATCC 49405 / DSM 1227 / KCTC 32145 / OM5) (Oligotropha carboxidovorans).